The chain runs to 202 residues: Ribonuclease HII (202 aa).

An RNase H type-2 domain is found at 11–200 (GLIAGVDEVG…VRKAIEEFNR (190 aa)). A divalent metal cation is bound by residues Asp-17, Glu-18, and Asp-109.

Belongs to the RNase HII family. Mn(2+) serves as cofactor. The cofactor is Mg(2+).

The protein localises to the cytoplasm. It carries out the reaction Endonucleolytic cleavage to 5'-phosphomonoester.. Its function is as follows. Endonuclease that specifically degrades the RNA of RNA-DNA hybrids. The protein is Ribonuclease HII of Actinobacillus succinogenes (strain ATCC 55618 / DSM 22257 / CCUG 43843 / 130Z).